The sequence spans 31 residues: Cytochrome b6-f complex subunit 6 (31 aa).

Residues 4-24 traverse the membrane as a helical segment; that stretch reads IISYFLFLIGALTLALVLFIG.

Belongs to the PetL family. In terms of assembly, the 4 large subunits of the cytochrome b6-f complex are cytochrome b6, subunit IV (17 kDa polypeptide, PetD), cytochrome f and the Rieske protein, while the 4 small subunits are PetG, PetL, PetM and PetN. The complex functions as a dimer.

The protein localises to the plastid. It localises to the chloroplast thylakoid membrane. In terms of biological role, component of the cytochrome b6-f complex, which mediates electron transfer between photosystem II (PSII) and photosystem I (PSI), cyclic electron flow around PSI, and state transitions. PetL is important for photoautotrophic growth as well as for electron transfer efficiency and stability of the cytochrome b6-f complex. This chain is Cytochrome b6-f complex subunit 6, found in Marchantia polymorpha (Common liverwort).